The chain runs to 152 residues: Large ribosomal subunit protein bL9 (152 aa).

Belongs to the bacterial ribosomal protein bL9 family.

In terms of biological role, binds to the 23S rRNA. The sequence is that of Large ribosomal subunit protein bL9 from Acaryochloris marina (strain MBIC 11017).